The sequence spans 548 residues: Non-structural protein NS1 (548 aa).

This sequence belongs to the orbivirus non-structural protein NS1 family.

The polypeptide is Non-structural protein NS1 (Segment-5) (Camelus dromedarius (Dromedary)).